The following is a 181-amino-acid chain: UPF0200 protein Ta0179 (181 aa).

6 to 13 (GMPGAGKD) is an ATP binding site.

This sequence belongs to the UPF0200 family.

This Thermoplasma acidophilum (strain ATCC 25905 / DSM 1728 / JCM 9062 / NBRC 15155 / AMRC-C165) protein is UPF0200 protein Ta0179.